The following is a 363-amino-acid chain: 3-isopropylmalate dehydrogenase (363 aa).

78–91 (GPKWEHLPPDQQPE) is a binding site for NAD(+). Substrate-binding residues include arginine 99, arginine 109, arginine 138, and aspartate 227. Mg(2+) is bound by residues aspartate 227, aspartate 251, and aspartate 255. Residue 285-297 (GSAPDITGKNIAN) participates in NAD(+) binding.

The protein belongs to the isocitrate and isopropylmalate dehydrogenases family. LeuB type 1 subfamily. As to quaternary structure, homodimer. Mg(2+) serves as cofactor. The cofactor is Mn(2+).

It localises to the cytoplasm. It carries out the reaction (2R,3S)-3-isopropylmalate + NAD(+) = 4-methyl-2-oxopentanoate + CO2 + NADH. It participates in amino-acid biosynthesis; L-leucine biosynthesis; L-leucine from 3-methyl-2-oxobutanoate: step 3/4. In terms of biological role, catalyzes the oxidation of 3-carboxy-2-hydroxy-4-methylpentanoate (3-isopropylmalate) to 3-carboxy-4-methyl-2-oxopentanoate. The product decarboxylates to 4-methyl-2 oxopentanoate. The protein is 3-isopropylmalate dehydrogenase of Shigella boydii serotype 4 (strain Sb227).